The following is a 1001-amino-acid chain: Chloride channel protein clh-3 (1001 aa).

The Cytoplasmic segment spans residues 1–48; sequence MGIGTKILSKIEKNKTSDGLTIPLTPTTQKQSSSWCSFESIKTFFRTV. Transmembrane regions (helical) follow at residues 49 to 85 and 91 to 117; these read IRDW…RLFD and HFTL…AHYI. Positions 123–127 match the Selectivity filter part_1 motif; that stretch reads GSGIP. S124 lines the chloride pocket. Residues 126–133 constitute an intramembrane region (helical); the sequence is IPEMKTIL. 2 consecutive transmembrane segments (helical) span residues 142–160 and 167–185; these read LSVR…SLGS and EGPF…TRLV. Positions 165–169 match the Selectivity filter part_2 motif; the sequence is GKEGP. 2 consecutive intramembrane regions (helical) follow at residues 202 to 214 and 218 to 226; these read MLAA…VACT and PIGGVLFSI. Transmembrane regions (helical) follow at residues 238–258, 285–313, 322–341, 405–425, and 433–456; these read YWRG…LRMF, LPIF…VLFL, IFQK…ISSL, YSPF…AILA, and GIFM…VFSL. Positions 433–437 match the Selectivity filter part_3 motif; the sequence is GIFMP. Chloride is bound by residues I434 and F435. The segment at residues 473 to 487 is an intramembrane region (helical); sequence GVYAVVGAAAFCGAV. Positions 488 to 489 form an intramembrane region, note=Loop between two helices; it reads TH. The helical intramembrane region spans 490–501; the sequence is TVSVAVIVFELT. An intramembrane region (note=Loop between two helices) is located at residues 502–506; it reads GQLCH. The helical transmembrane segment at 507 to 524 threads the bilayer; that stretch reads LLPVMIAVLIANAVASYL. Residues 525 to 1001 are Cytoplasmic-facing; that stretch reads QPSIYDSIIR…LPDDVHDEKF (477 aa). Y529 is a chloride binding site. The 60-residue stretch at 560 to 619 folds into the CBS 1 domain; the sequence is MISPLVYIAKDSTVGDIKRALETKTRIRAFPLVENMESLALVGSVSRSQLQRYVDSQIGT. Residues 625 to 657 adopt a coiled-coil conformation; that stretch reads EATRRIKQRLEDEESERKRREESKSDDTEDSLE. Over residues 634–650 the composition is skewed to basic and acidic residues; the sequence is LEDEESERKRREESKSD. The segment at 634–662 is disordered; sequence LEDEESERKRREESKSDDTEDSLETTGAG. Phosphoserine; by gck-3 occurs at positions 742 and 747. In terms of domain architecture, CBS 2 spans 788–845; it reads IDSTPFQLSEYTSLFKAHSLFSLLGLNRAYVTKKGQLIGVVALKELRLAIEYLQSGKV.

It belongs to the chloride channel (TC 2.A.49) family. Isoform a interacts (via RFLI motif) with gck-3 (via C-terminus). In terms of processing, phosphorylated by gck-3; phosphorylation at both Ser-742 and Ser-747 is required to inhibit channel activity. Dephosphorylated by gsp-1/2 during cell swelling and oocyte meiotic maturation, which results in channel activation. In terms of tissue distribution, expressed in excretory cell, 4 anterior epithelial cells of the intestine, hermaphrodite-specific neurons and enteric muscles. Expressed also in vulva and uterus. Isoform a is expressed in oocytes (at protein level).

It is found in the cell membrane. Voltage-gated chloride channel. Insensitive to depolarizing conditioning voltages, requires low voltages for activation, insensitive to chloride levels and has a mild sensitivity to low pH. Channel gating properties are conferred by the cytoplasmic C-terminus. Plays a role in egg laying by modulating hermaphrodite-specific neurons (HSN) excitability and the ovulatory contractions of gap-junction-coupled gonadal sheath cells. When active, may prevent tubular formation of the excretory canals. Activated during oocyte meiotic maturation and by membrane hyperpolarization and cell swelling. Inhibited by Zn(2+) and to a lesser extent by Cd(2+). Its function is as follows. Voltage-gated chloride channel. Sensitive to depolarizing conditioning voltages, requires stronger voltages for activation and activation is slower, is inhibited by low concentrations of chloride and is activated by low pH. Channel gating properties are conferred by the cytoplasmic C-terminus. This Caenorhabditis elegans protein is Chloride channel protein clh-3.